Reading from the N-terminus, the 222-residue chain is Uridine diphosphate glucose pyrophosphatase NUDT14 (222 aa).

Residues 38–206 enclose the Nudix hydrolase domain; it reads KTHDSVTVLL…DIPKTLGVIF (169 aa). The short motif at 111–129 is the Nudix box element; that stretch reads PGLSLEEVACKEAWEECGY.

Belongs to the Nudix hydrolase family. Homodimer. Mg(2+) serves as cofactor.

The protein resides in the cytoplasm. The catalysed reaction is UDP-sugar + H2O = UMP + alpha-D-aldose 1-phosphate.. Hydrolyzes UDP-glucose to glucose 1-phosphate and UMP and ADP-ribose to ribose 5-phosphate and AMP. The physiological substrate is probably UDP-glucose. Poor activity on other substrates such as ADP-glucose, CDP-glucose, GDP-glucose and GDP-mannose. In Homo sapiens (Human), this protein is Uridine diphosphate glucose pyrophosphatase NUDT14 (NUDT14).